Reading from the N-terminus, the 706-residue chain is Glycine--tRNA ligase beta subunit (706 aa).

Belongs to the class-II aminoacyl-tRNA synthetase family. Tetramer of two alpha and two beta subunits.

It is found in the cytoplasm. It carries out the reaction tRNA(Gly) + glycine + ATP = glycyl-tRNA(Gly) + AMP + diphosphate. This is Glycine--tRNA ligase beta subunit from Hyphomonas neptunium (strain ATCC 15444).